Reading from the N-terminus, the 265-residue chain is Isoprenyl transferase (265 aa).

Residue D35 is part of the active site. D35 provides a ligand contact to Mg(2+). Residues 36 to 39 (GNGR), W40, R48, H52, and 80 to 82 (SIE) each bind substrate. The Proton acceptor role is filled by N83. Substrate is bound by residues W84, R86, R203, and 209 to 211 (RIS). E222 serves as a coordination point for Mg(2+).

This sequence belongs to the UPP synthase family. Homodimer. Mg(2+) is required as a cofactor.

Functionally, catalyzes the condensation of isopentenyl diphosphate (IPP) with allylic pyrophosphates generating different type of terpenoids. This chain is Isoprenyl transferase, found in Chlorobaculum tepidum (strain ATCC 49652 / DSM 12025 / NBRC 103806 / TLS) (Chlorobium tepidum).